The chain runs to 434 residues: Chaperone SurA (434 aa).

Positions 1–22 (MKHSKKIIFALLALAMSNTSMA) are cleaved as a signal peptide. PpiC domains lie at 173–274 (DVEF…KVVD) and 283–383 (VEEV…QLES).

It localises to the periplasm. The catalysed reaction is [protein]-peptidylproline (omega=180) = [protein]-peptidylproline (omega=0). Chaperone involved in the correct folding and assembly of outer membrane proteins. Recognizes specific patterns of aromatic residues and the orientation of their side chains, which are found more frequently in integral outer membrane proteins. May act in both early periplasmic and late outer membrane-associated steps of protein maturation. The chain is Chaperone SurA from Shewanella frigidimarina (strain NCIMB 400).